The following is a 461-amino-acid chain: MTATDNARQVTIIGAGLAGTLVARLLARNGWQVNLFERRPDPRIETGARGRSINLALAERGAHALRLAGLEREVLAEAVMMRGRMVHVPGTPPNLQPYGRDDSEVIWSINRDRLNRILLDGAEAAGASIHFNLGLDSVDFARQRLTLSNVSGERLEKRFHLLIGADGCNSAVRQAMASVVDLGEHLETQPHGYKELQITPEASAQFNLEPNALHIWPHGDYMCIALPNLDRSFTVTLFLHHQSPAAQPASPCFAQLVDGHAARRFFQRQFPDLSPMLDSLEQDFEHHPTGKLATLRLTTWHVGGQAVLLGDAAHPMVPFHGQGMNCALEDAVALAEHLQSAADNASALAAFTAQRQPDALAIQAMALENYVEMSSKVASPTYLLERELGQIMAQRQPTRFIPRYSMVTFSRLPYAQAMARGQIQEQLLKFAVANHSDLTSINLDAVEHEVTRCLPPLSHLC.

FAD contacts are provided by residues 17 to 18, 37 to 39, and Ala-56; these read LA and ERR. L-kynurenine-binding residues include Arg-84 and Tyr-98. Residues Arg-111, Leu-135, Asp-311, and 324–325 each bind FAD; that span reads MN. The L-kynurenine site is built by Asn-369 and Tyr-404.

It belongs to the aromatic-ring hydroxylase family. KMO subfamily. It depends on FAD as a cofactor.

The catalysed reaction is L-kynurenine + NADPH + O2 + H(+) = 3-hydroxy-L-kynurenine + NADP(+) + H2O. It participates in cofactor biosynthesis; NAD(+) biosynthesis; quinolinate from L-kynurenine: step 1/3. It functions in the pathway siderophore biosynthesis; quinolobactin biosynthesis. Functionally, catalyzes the hydroxylation of L-kynurenine (L-Kyn) to form 3-hydroxy-L-kynurenine (L-3OHKyn). Probably required for the synthesis of quinolinic acid and the siderophore quinolobactin. In Pseudomonas fluorescens, this protein is Kynurenine 3-monooxygenase.